Here is a 468-residue protein sequence, read N- to C-terminus: MNDFGIKNMDQVAPVANSFRGTLKRQPAFDTFDGSLFAVLPSLSEDQTLQEVPTGLDSVSHDSASCELPLLTPCSKAVMSQALKATFSGFQKEQRRLGIPKNPWLWSEQQVCQWLLWATNEFSLVNVNLHQFGMNGQMLCNLGKERFLELAPDFVGDILWEHLEQMIKENQEKTEDQYEENSHLNAVPHWINSNTLGFSMEQAPYGMQAPNYPKDNLLDSMCPPSATPAALGSELQMLPKSRLNTVNVNYCSISQDFPSSNVNLLNNNSGKPKDHDSPENGGDSFESSDSLLRSWNSQSSLLDVQRVPSFESFEEDCSQSLCLSKLTMSFKDYIQERSDPVEQGKPVIPAAVLAGFTGSGPIQLWQFLLELLSDKSCQSFISWTGDGWEFKLADPDEVARRWGKRKNKPKMNYEKLSRGLRYYYDKNIIHKTSGKRYVYRFVCDLQNLLGFTPEELHAILGVQPDTED.

The PNT domain occupies 85–170 (ATFSGFQKEQ…EHLEQMIKEN (86 aa)). Serine 220 and serine 225 each carry phosphoserine. Residues 262–290 (VNLLNNNSGKPKDHDSPENGGDSFESSDS) are disordered. Residues serine 294, serine 297, and serine 300 each carry the phosphoserine modification. A DNA-binding region (ETS) is located at residues 362–442 (IQLWQFLLEL…SGKRYVYRFV (81 aa)).

Belongs to the ETS family. Phosphorylation by CDK10 at Ser-220 and Ser-225 creates a phosphodegron that targets ETS2 for proteasomal degradation.

It is found in the nucleus. Functionally, transcription factor activating transcription. Binds specifically the GGA DNA motif in gene promoters and stimulates transcription of those genes. The chain is Protein C-ets-2 (Ets2) from Mus musculus (Mouse).